Consider the following 95-residue polypeptide: Antitoxin VapB41 (95 aa).

Its function is as follows. Antitoxin component of a type II toxin-antitoxin (TA) system. The protein is Antitoxin VapB41 (vapB41) of Mycobacterium tuberculosis (strain CDC 1551 / Oshkosh).